Reading from the N-terminus, the 455-residue chain is Mu-like prophage FluMu DNA circularization protein (455 aa).

Residues 368–387 (VILDNADAEQWTSYAALEQY) constitute a DNA-binding region (H-T-H motif).

It to phage Mu protein N.

The sequence is that of Mu-like prophage FluMu DNA circularization protein from Haemophilus influenzae (strain ATCC 51907 / DSM 11121 / KW20 / Rd).